Here is a 344-residue protein sequence, read N- to C-terminus: Late embryogenesis abundant protein 17 (344 aa).

Disordered regions lie at residues 1–20 and 116–258; these read MASRQDRREARAEADARRAA and KDYT…QGQG. Residues 3 to 52 are a coiled coil; sequence SRQDRREARAEADARRAAEEIARARDERVMQAEVDARSAADEIARARADR. 3 stretches are compositionally biased toward basic and acidic residues: residues 116-163, 172-230, and 238-252; these read KDYT…KDAV, EATK…DATK, and DKARETAATHDDATD.

Belongs to the LEA type 4 family. In terms of tissue distribution, expressed in embryos.

It localises to the nucleus. Involved in abiotic stress responses. May function as chaperone and contribute to prevent the formation of damaging protein aggregates. This is Late embryogenesis abundant protein 17 from Oryza sativa subsp. japonica (Rice).